Consider the following 789-residue polypeptide: Protein FLOWERING LOCUS D (789 aa).

The tract at residues 1-23 is disordered; it reads MVSFSAPKKRRRGRSQRSMSSLN. In terms of domain architecture, SWIRM spans 76–177; it reads NKEATTEALL…FGIAQAIKDK (102 aa). FAD-binding positions include Ser-195, Glu-214, Arg-216, Arg-222, and 240 to 243; that span reads GGSV. Residue Lys-287 forms a Glycyl lysine isopeptide (Lys-Gly) (interchain with G-Cter in SUMO) linkage. Residues Glu-595, 604–605, and 607–612 each bind FAD; these read TM and GAFVTG. Residues Lys-693 and Lys-770 each participate in a glycyl lysine isopeptide (Lys-Gly) (interchain with G-Cter in SUMO) cross-link.

The protein belongs to the flavin monoamine oxidase family. As to quaternary structure, interacts with HDA6. FAD is required as a cofactor. Sumoylated at Lys-287, Lys-693 and Lys-770 by SIZ1. Sumoylation alters its activity and the histone H4 acetylation status of FLC locus, promoting FLC expression.

Functionally, probable histone demethylase that promotes flowering independently of the photoperiod and vernalization pathways by repressing FLOWERING LOCUS C (FLC), a floral repressor that blocks the transition from vegetative to reproductive development. Probably mediates histone H3 'Lys-4' demethylation at FLC locus. Seems to act in partial redundancy with LDL1 and LDL2 to repress FLC expression. Required for histone H4 deacetylation of FLC locus. May be a component of the histone deacetylase complex. Forms a histone deacetylase complex with HDA5, HDA6 and MSI4/FVE that represses FLC gene expression to control flowering time. Required for systemic acquired resistance (SAR) toward pathogenic bacteria (e.g. Pseudomonas syringae pv tomato DC3000 (avrPto)). Together with FLD and MSI4/FVE, contributes to dehydroabietinal-dependent (DA, a diterpenoid tricyclic diterpene) activation of flowering ans SAR. The polypeptide is Protein FLOWERING LOCUS D (Arabidopsis thaliana (Mouse-ear cress)).